The following is a 741-amino-acid chain: Copper-transporting ATPase (741 aa).

The 67-residue stretch at methionine 1 to lysine 67 folds into the HMA domain. The Cytoplasmic portion of the chain corresponds to methionine 1–lysine 83. Cu cation contacts are provided by cysteine 12 and cysteine 15. A helical transmembrane segment spans residues leucine 84–serine 104. Over proline 105–alanine 124 the chain is Extracellular. The chain crosses the membrane as a helical span at residues cysteine 125–glutamine 144. At glycine 145 to histidine 151 the chain is on the cytoplasmic side. A helical transmembrane segment spans residues arginine 152–leucine 172. The Extracellular portion of the chain corresponds to tryptophan 173–phenylalanine 190. The chain crosses the membrane as a helical span at residues glutamate 191 to lysine 211. The Cytoplasmic portion of the chain corresponds to aspartate 212 to lysine 339. The helical transmembrane segment at valine 340–isoleucine 362 threads the bilayer. Over alanine 363–alanine 375 the chain is Extracellular. Residues leucine 376–leucine 393 form a helical membrane-spanning segment. Topologically, residues alanine 394 to isoleucine 681 are cytoplasmic. The active-site 4-aspartylphosphate intermediate is the aspartate 431. Mg(2+) is bound by residues aspartate 627 and aspartate 631. Residues lysine 682 to glycine 701 traverse the membrane as a helical segment. Over valine 702–proline 712 the chain is Extracellular. A helical transmembrane segment spans residues alanine 713–glutamine 731. At arginine 732 to histidine 741 the chain is on the cytoplasmic side.

This sequence belongs to the cation transport ATPase (P-type) (TC 3.A.3) family. Type IB subfamily.

The protein localises to the cell membrane. The catalysed reaction is Cu(2+)(in) + ATP + H2O = Cu(2+)(out) + ADP + phosphate + H(+). Its function is as follows. Probably involved in copper export. The chain is Copper-transporting ATPase (copA) from Helicobacter pylori (Campylobacter pylori).